Here is a 72-residue protein sequence, read N- to C-terminus: Translation initiation factor IF-1 (72 aa).

Positions 1–72 (MAKEELLEFP…TKGRITYRFK (72 aa)) constitute an S1-like domain.

It belongs to the IF-1 family. Component of the 30S ribosomal translation pre-initiation complex which assembles on the 30S ribosome in the order IF-2 and IF-3, IF-1 and N-formylmethionyl-tRNA(fMet); mRNA recruitment can occur at any time during PIC assembly.

The protein resides in the cytoplasm. Functionally, one of the essential components for the initiation of protein synthesis. Stabilizes the binding of IF-2 and IF-3 on the 30S subunit to which N-formylmethionyl-tRNA(fMet) subsequently binds. Helps modulate mRNA selection, yielding the 30S pre-initiation complex (PIC). Upon addition of the 50S ribosomal subunit IF-1, IF-2 and IF-3 are released leaving the mature 70S translation initiation complex. The polypeptide is Translation initiation factor IF-1 (Caulobacter vibrioides (strain ATCC 19089 / CIP 103742 / CB 15) (Caulobacter crescentus)).